A 561-amino-acid polypeptide reads, in one-letter code: MAVAFRGGRGGVGSGQSTGLRSFFSYRIFISALFSFLFLATFSVVLNSSRHQPHQDHTLPSMGNAYMQRTFLALQSDPLKTRLDLIHKQAIDHLTLVNAYAAYARKLKLDASKQLKLFEDLAINFSDLQSKPGLKSAVSDNGNALEEDSFRQLEKEVKDKVKTARMMIVESKESYDTQLKIQKLKDTIFAVQEQLTKAKKNGAVASLISAKSVPKSLHCLAMRLVGERISNPEKYKDAPPDPAAEDPTLYHYAIFSDNVIAVSVVVRSVVMNAEEPWKHVFHVVTDRMNLAAMKVWFKMRPLDRGAHVEIKSVEDFKFLNSSYAPVLRQLESAKLQKFYFENQAENATKDSHNLKFKNPKYLSMLNHLRFYLPEMYPKLNKILFLDDDVVVQKDVTGLWKINLDGKVNGAVETCFGSFHRYGQYLNFSHPLIKENFNPSACAWAFGMNIFDLNAWRREKCTDQYHYWQNLNEDRTLWKLGTLPPGLITFYSKTKSLDKSWHVLGLGYNPGVSMDEIRNAGVIHYNGNMKPWLDIAMNQYKSLWTKYVDNEMEFVQMCNFGL.

The Cytoplasmic portion of the chain corresponds to 1 to 27 (MAVAFRGGRGGVGSGQSTGLRSFFSYR). Residues 28 to 48 (IFISALFSFLFLATFSVVLNS) form a helical; Signal-anchor for type II membrane protein membrane-spanning segment. At 49–561 (SRHQPHQDHT…EFVQMCNFGL (513 aa)) the chain is on the lumenal side. N-linked (GlcNAc...) asparagine glycosylation is found at Asn-124, Asn-320, Asn-346, and Asn-426.

It belongs to the glycosyltransferase 8 family. Expressed in roots, inflorescences, siliques, leaves and stems.

It localises to the golgi apparatus membrane. The protein operates within glycan metabolism; pectin biosynthesis. May be involved in pectin synthesis. This is Probable galacturonosyltransferase 9 (GAUT9) from Arabidopsis thaliana (Mouse-ear cress).